The following is a 200-amino-acid chain: Probable UbiX-like flavin prenyltransferase (200 aa).

Residues 9–11 (GAT), S36, 87–90 (SMKT), and R122 contribute to the FMN site.

This sequence belongs to the UbiX/PAD1 family. YclB subfamily. In terms of assembly, homododecamer.

The enzyme catalyses dimethylallyl phosphate + FMNH2 = prenylated FMNH2 + phosphate. In terms of biological role, involved in the non-oxidative decarboxylation and detoxification of phenolic derivatives under both aerobic and anaerobic conditions. Flavin prenyltransferase that catalyzes the synthesis of the prenylated FMN cofactor (prenyl-FMN) for phenolic acid decarboxylase. The sequence is that of Probable UbiX-like flavin prenyltransferase from Streptomyces sp. (strain D7).